An 802-amino-acid polypeptide reads, in one-letter code: Cell division cycle 5-like protein (802 aa).

HTH myb-type domains are found at residues 1–56 and 57–108; these read MPRI…WLDP and SIKK…DKAA. 2 consecutive DNA-binding regions (H-T-H motif) follow at residues 31–54 and 82–104; these read WSRI…YEWL and WRTI…EFLL. The segment at 108–143 is disordered; the sequence is AQRDNEEETTDDPRKLKPGEIDPNPETKPARPDPID. Residues 118–127 are compositionally biased toward basic and acidic residues; it reads DDPRKLKPGE. Residue Lys-135 forms a Glycyl lysine isopeptide (Lys-Gly) (interchain with G-Cter in SUMO2) linkage. Residues 142–245 adopt a coiled-coil conformation; the sequence is IDMDEDELEM…DADFRKLRQQ (104 aa). The Nuclear localization signal signature appears at 165–271; the sequence is KKAKRKAREK…KDKQHLKRKK (107 aa). The segment at 200-206 is required for interaction with CTNNBL1; it reads KKRKKKR. A Glycyl lysine isopeptide (Lys-Gly) (interchain with G-Cter in SUMO2) cross-link involves residue Lys-219. The residue at position 227 (Thr-227) is a Phosphothreonine. Basic and acidic residues predominate over residues 246-262; the sequence is DLDGELRSEKEGRDRKK. The segment at 246-278 is disordered; sequence DLDGELRSEKEGRDRKKDKQHLKRKKESDLPSA. Residues 260 to 606 are interaction with PPP1R8; sequence RKKDKQHLKR…NKKGKTVGFG (347 aa). Phosphoserine occurs at positions 303 and 358. 6 positions are modified to phosphothreonine: Thr-377, Thr-385, Thr-396, Thr-404, Thr-411, and Thr-415. The span at 409–418 shows a compositional bias: polar residues; the sequence is LSTPFRTPSH. The segment at 409-459 is disordered; the sequence is LSTPFRTPSHGSEGLTPRSGTTPKPVINSTPGRTPLRDKLNINPEDGMADY. Ser-417 carries the post-translational modification Phosphoserine. Residues Thr-424 and Thr-430 each carry the phosphothreonine modification. The segment covering 426–440 has biased composition (polar residues); that stretch reads RSGTTPKPVINSTPG. The residue at position 437 (Ser-437) is a Phosphoserine. Residues Thr-438 and Thr-442 each carry the phosphothreonine modification. Lys-487 is covalently cross-linked (Glycyl lysine isopeptide (Lys-Gly) (interchain with G-Cter in SUMO2)). Residues 501 to 659 form an interaction with DAPK3 region; sequence ELEEREIDDT…GELSSEAYNQ (159 aa). Coiled-coil stretches lie at residues 676–701 and 764–802; these read RYTR…INRG and PRRL…KAKF. The segment at 706–800 is interaction with PLRG1; it reads EAKRAAKMEK…LLLEKETLKA (95 aa).

This sequence belongs to the CEF1 family. In terms of assembly, homodimer. Interacts with DAPK3. Component of the precatalytic, catalytic and postcatalytic spliceosome complexes. Part of a spliceosomal 'core' complex consisting of CDC5L, PLRG1, SPF27, CCAP1, CCAP3 and CCAP6. Interacts with PLRG1, Lodestar/TTF2, and NIPP1/PPP1R8. Component of the minor spliceosome, which splices U12-type introns. Within this complex, interacts with SCNM1. Component of the PRP19-CDC5L splicing complex composed of a core complex comprising a homotetramer of PRPF19, CDC5L, PLRG1 and BCAS2, and at least three less stably associated proteins CTNNBL1, CWC15 and HSPA8. Interacts (via its C-terminus) directly in the complex with PRPF19 and BCAS2. Interacts (via its C-terminus) directly with PRGL1 (via its WD40 repeat domain); the interaction is required for mRNA splicing but not for spliceosome assembly. Also interacts with CTNNBL1. Interacts with PRPF19 (via N-terminus). Interacts with USB1. Interacts with DDX41. In terms of processing, phosphorylated on serine and threonine residues. Phosphorylation on Thr-411 and Thr-438 is required for CDC5L-mediated mRNA splicing. Has no effect on subcellular location nor on homodimerization. Phosphorylated in vitro by CDK2. Phosphorylation enhances interaction with PPP1R8.

It is found in the nucleus. Its subcellular location is the nucleus speckle. The protein localises to the cytoplasm. Its function is as follows. DNA-binding protein involved in cell cycle control. May act as a transcription activator. Plays a role in pre-mRNA splicing as core component of precatalytic, catalytic and postcatalytic spliceosomal complexes. Component of the PRP19-CDC5L complex that forms an integral part of the spliceosome and is required for activating pre-mRNA splicing. The PRP19-CDC5L complex may also play a role in the response to DNA damage (DDR). As a component of the minor spliceosome, involved in the splicing of U12-type introns in pre-mRNAs. In Bos taurus (Bovine), this protein is Cell division cycle 5-like protein (CDC5L).